Reading from the N-terminus, the 367-residue chain is Bi-functional coumaroyl CoA and feruloyl CoA ortho-hydroxylase Diox4 (367 aa).

A Fe2OG dioxygenase domain is found at 207-317; it reads IREPMLVGSR…RISVPLFVNP (111 aa). A 2-oxoglutarate-binding site is contributed by Tyr223. Fe cation-binding residues include His238, Asp240, and His298. Residues Arg308 and Ser310 each contribute to the 2-oxoglutarate site.

It belongs to the iron/ascorbate-dependent oxidoreductase family. The cofactor is L-ascorbate. Requires Fe(2+) as cofactor.

It catalyses the reaction (E)-4-coumaroyl-CoA + 2-oxoglutarate + O2 = (E)-2,4-dihydroxycinnamoyl-CoA + succinate + CO2. It carries out the reaction (E)-feruloyl-CoA + 2-oxoglutarate + O2 = (E)-6-hydroxyferuloyl-CoA + succinate + CO2. The protein operates within phenylpropanoid metabolism. With respect to regulation, repressed by the competitive inhibitor psoralen, but not by umbelliferone, xanthotoxin, bergapten and isopimpinellin. 2-oxoglutarate (OG)- and Fe(II)-dependent dioxygenase (2OGD) involved in scopoletin and umbelliferone biosynthesis. Converts feruloyl CoA into 6'-hydroxyferuloyl CoA, and p-coumaroyl CoA into 2,4-dihydroxycinnamoyl-CoA. Has no activity with cinnamic acid, caffeic acid, p-coumaric acid, ferulic acid, cinnamoyl-CoA and caffeoyl-CoA. The protein is Bi-functional coumaroyl CoA and feruloyl CoA ortho-hydroxylase Diox4 of Ruta graveolens (Common rue).